Consider the following 1823-residue polypeptide: Vitellogenin (1823 aa).

The signal sequence occupies residues 1 to 14; it reads MWKLLLVALAFALA. Glutamine 17 carries the post-translational modification Pyrrolidone carboxylic acid. The Vitellogenin domain occupies 18 to 658; sequence FQPGKVYRYS…SPSGPLPRAV (641 aa). Residues 953-986 are disordered; that stretch reads KGLISQQQQQPHHQQQPHQHGQDQARAAYQRPWA. Low complexity predominate over residues 958 to 976; sequence QQQQQPHHQQQPHQHGQDQ. The N-linked (GlcNAc...) asparagine glycan is linked to asparagine 1097. Positions 1119-1289 are disordered; the sequence is SDKDKDAKKP…SSSSSESKSL (171 aa). 2 stretches are compositionally biased toward low complexity: residues 1128 to 1149 and 1178 to 1192; these read PPGSSSSSSSSSSSSSSSSSSD and SSSSSSSSSSSSDSS. Positions 1194-1206 are enriched in basic residues; that stretch reads SPHKHGGAKRQHA. Composition is skewed to low complexity over residues 1217–1238 and 1253–1286; these read SHSSSSSSSSSSSSSSASKSFS and SSSSSSSSDSSSSSSSSSSSSSSSSSSSSSSSES. N-linked (GlcNAc...) asparagine glycosylation occurs at asparagine 1298. A disordered region spans residues 1308-1351; sequence VPQRKPQTSRRHTPASSSSSSSSSSSSSSSSSSSDSDMTVSAES. Low complexity predominate over residues 1323–1344; it reads SSSSSSSSSSSSSSSSSSSDSD. Residues 1564 to 1732 form the VWFD domain; the sequence is SACELNEQSL…SWIAPDETCG (169 aa). 2 disulfides stabilise this stretch: cysteine 1566–cysteine 1695 and cysteine 1589–cysteine 1731. N-linked (GlcNAc...) asparagine glycosylation is present at asparagine 1675.

In terms of processing, what corresponds to phosvitin in other species is lost during maturation of vitellogenin to lipovitellin. As to expression, produced by the liver, secreted into the blood and then sequestered by receptor mediated endocytosis into growing oocytes, where it is generally cleaved, giving rise to the respective yolk components lipovitellins 1 and 2.

Functionally, precursor of the major egg-yolk proteins that are sources of nutrients during early development of oviparous organisms. The polypeptide is Vitellogenin (Ichthyomyzon unicuspis (Silver lamprey)).